A 106-amino-acid polypeptide reads, in one-letter code: uncharacterized protein (106 aa).

This is an uncharacterized protein from Haemophilus influenzae (strain ATCC 51907 / DSM 11121 / KW20 / Rd).